The chain runs to 884 residues: Protein translocase subunit SecA (884 aa).

Residues glutamine 83, 101 to 105, and aspartate 491 each bind ATP; that span reads GEGKT.

It belongs to the SecA family.

The protein localises to the plastid. It is found in the chloroplast stroma. It localises to the chloroplast thylakoid membrane. The enzyme catalyses ATP + H2O + cellular proteinSide 1 = ADP + phosphate + cellular proteinSide 2.. Functionally, has a central role in coupling the hydrolysis of ATP to the transfer of proteins across the thylakoid membrane. The sequence is that of Protein translocase subunit SecA from Pyropia yezoensis (Susabi-nori).